The following is a 46-amino-acid chain: Apamin (46 aa).

A signal peptide spans 1–27; that stretch reads MISMLRCISLFLSVILITGYFVTPVMS. 2 disulfides stabilise this stretch: Cys-28-Cys-38 and Cys-30-Cys-42. An essential for toxin activity region spans residues 40-41; sequence RR. At His-45 the chain carries Histidine amide.

As to expression, expressed by the venom gland.

The protein resides in the secreted. Neurotoxin that blocks voltage-independent calcium-activated potassium channels (KCNN1=SK1, KCNN2=SK2, KCNN3=SK3). This chain is Apamin, found in Apis cerana cerana (Oriental honeybee).